Consider the following 210-residue polypeptide: Urease accessory protein UreG (210 aa).

15-22 contacts GTP; that stretch reads GPVGSGKT.

This sequence belongs to the SIMIBI class G3E GTPase family. UreG subfamily. Homodimer. UreD, UreF and UreG form a complex that acts as a GTP-hydrolysis-dependent molecular chaperone, activating the urease apoprotein by helping to assemble the nickel containing metallocenter of UreC. The UreE protein probably delivers the nickel.

The protein resides in the cytoplasm. Functionally, facilitates the functional incorporation of the urease nickel metallocenter. This process requires GTP hydrolysis, probably effectuated by UreG. This is Urease accessory protein UreG from Ralstonia nicotianae (strain ATCC BAA-1114 / GMI1000) (Ralstonia solanacearum).